Consider the following 330-residue polypeptide: Glucan endo-1,3-beta-glucosidase GIII (330 aa).

Residues 1-25 form the signal peptide; it reads MARKGVDVAVALVLVALAAFPAVHS. Glu117 (proton donor) is an active-site residue. Glu255 acts as the Nucleophile in catalysis.

The protein belongs to the glycosyl hydrolase 17 family.

The enzyme catalyses Hydrolysis of (1-&gt;3)-beta-D-glucosidic linkages in (1-&gt;3)-beta-D-glucans.. In terms of biological role, may provide a degree of protection against microbial invasion of germinated barley grain through its ability to degrade fungal cell wall polysaccharides. This is Glucan endo-1,3-beta-glucosidase GIII from Hordeum vulgare (Barley).